The following is a 384-amino-acid chain: D-alanine--D-alanine ligase (384 aa).

Residues 167–374 (KKLFAAEGLP…YPTLLATMVD (208 aa)) form the ATP-grasp domain. 195-250 (CERLSLPVFVKPARGGSSIGISRVSSWGQLPSAIAYARRHDPKVIVEAAVNGRELE) is an ATP binding site. Positions 329, 341, and 343 each coordinate Mg(2+).

Belongs to the D-alanine--D-alanine ligase family. It depends on Mg(2+) as a cofactor. Requires Mn(2+) as cofactor.

The protein localises to the cytoplasm. It carries out the reaction 2 D-alanine + ATP = D-alanyl-D-alanine + ADP + phosphate + H(+). It participates in cell wall biogenesis; peptidoglycan biosynthesis. In terms of biological role, cell wall formation. The protein is D-alanine--D-alanine ligase of Mycobacterium leprae (strain TN).